We begin with the raw amino-acid sequence, 221 residues long: Putative adhesin P1-like protein MPN_131 (221 aa).

A compositionally biased stretch (low complexity) spans 13–36 (RYGNNHRGSNSSTSGVTTQGQSQN). Disordered regions lie at residues 13–51 (RYGN…NVGV) and 90–183 (GWRN…TPSG). Over residues 37–48 (ASSNEPAPTFSN) the composition is skewed to polar residues. Basic and acidic residues predominate over residues 130–139 (LKQDKADKSG). Composition is skewed to polar residues over residues 149 to 160 (SGDNLTNYTNLP) and 174 to 183 (HSPTRTTPSG).

The protein belongs to the adhesin P1 family.

The sequence is that of Putative adhesin P1-like protein MPN_131 from Mycoplasma pneumoniae (strain ATCC 29342 / M129 / Subtype 1) (Mycoplasmoides pneumoniae).